The following is a 450-amino-acid chain: Glucose-6-phosphate isomerase (450 aa).

Phosphothreonine is present on T38. E290 functions as the Proton donor in the catalytic mechanism. Catalysis depends on residues H311 and K425.

It belongs to the GPI family.

It localises to the cytoplasm. The catalysed reaction is alpha-D-glucose 6-phosphate = beta-D-fructose 6-phosphate. It functions in the pathway carbohydrate biosynthesis; gluconeogenesis. It participates in carbohydrate degradation; glycolysis; D-glyceraldehyde 3-phosphate and glycerone phosphate from D-glucose: step 2/4. In terms of biological role, catalyzes the reversible isomerization of glucose-6-phosphate to fructose-6-phosphate. The chain is Glucose-6-phosphate isomerase from Bacillus subtilis (strain 168).